A 217-amino-acid polypeptide reads, in one-letter code: MAWFFAPEPVMVTADEALKGGRHPVLENPAPHTVLGTPVTGPWKEGQQRIWIGLGCFWGVEQMYWQMDGVEGTSVGYAGGFTPNPTYREVCSGRTGHTEIVEVVYDPSKISLEQLVARGLEAHDPTQGFRQGNDVGTQYRSAYYTENEEDAARVKAVVDAYGETLKQHGFGEITTEIGVISPSEYFLAEDYHQQYLDKNPDGYCPHHSTGIPCGVEA.

Cys56 is an active-site residue.

This sequence belongs to the MsrA Met sulfoxide reductase family.

The catalysed reaction is L-methionyl-[protein] + [thioredoxin]-disulfide + H2O = L-methionyl-(S)-S-oxide-[protein] + [thioredoxin]-dithiol. It carries out the reaction [thioredoxin]-disulfide + L-methionine + H2O = L-methionine (S)-S-oxide + [thioredoxin]-dithiol. In terms of biological role, has an important function as a repair enzyme for proteins that have been inactivated by oxidation. Catalyzes the reversible oxidation-reduction of methionine sulfoxide in proteins to methionine. The protein is Peptide methionine sulfoxide reductase MsrA of Corynebacterium glutamicum (strain R).